Here is a 147-residue protein sequence, read N- to C-terminus: uncharacterized protein (147 aa).

Disordered regions lie at residues 1–49 (MRTP…NLNE) and 125–147 (SPSP…RKSN). Low complexity-rich tracts occupy residues 8-49 (NNNY…NLNE) and 125-140 (SPSP…PQNT).

This is an uncharacterized protein from Dictyostelium discoideum (Social amoeba).